The primary structure comprises 463 residues: Glutamate--tRNA ligase 2 (463 aa).

The short motif at 11 to 21 (PSPTGYLHIGG) is the 'HIGH' region element. The 'KMSKS' region signature appears at 240 to 244 (KLSKR). Residue lysine 243 participates in ATP binding.

Belongs to the class-I aminoacyl-tRNA synthetase family. Glutamate--tRNA ligase type 1 subfamily. In terms of assembly, monomer.

The protein localises to the cytoplasm. It catalyses the reaction tRNA(Glu) + L-glutamate + ATP = L-glutamyl-tRNA(Glu) + AMP + diphosphate. Functionally, catalyzes the attachment of glutamate to tRNA(Glu) in a two-step reaction: glutamate is first activated by ATP to form Glu-AMP and then transferred to the acceptor end of tRNA(Glu). The polypeptide is Glutamate--tRNA ligase 2 (Campylobacter jejuni subsp. jejuni serotype O:6 (strain 81116 / NCTC 11828)).